We begin with the raw amino-acid sequence, 249 residues long: Coproheme decarboxylase (249 aa).

Fe-coproporphyrin III contacts are provided by residues Arg131, Tyr145–Lys149, His172, and Gln185. Tyr145 is an active-site residue.

Belongs to the ChdC family. Type 1 subfamily. Fe-coproporphyrin III serves as cofactor.

The catalysed reaction is Fe-coproporphyrin III + 2 H2O2 + 2 H(+) = heme b + 2 CO2 + 4 H2O. The enzyme catalyses Fe-coproporphyrin III + H2O2 + H(+) = harderoheme III + CO2 + 2 H2O. It catalyses the reaction harderoheme III + H2O2 + H(+) = heme b + CO2 + 2 H2O. The protein operates within porphyrin-containing compound metabolism; protoheme biosynthesis. Involved in coproporphyrin-dependent heme b biosynthesis. Catalyzes the decarboxylation of Fe-coproporphyrin III (coproheme) to heme b (protoheme IX), the last step of the pathway. The reaction occurs in a stepwise manner with a three-propionate intermediate. This Staphylococcus epidermidis (strain ATCC 12228 / FDA PCI 1200) protein is Coproheme decarboxylase.